The following is an 845-amino-acid chain: MANFLKKMIENDKKELRRLEKIADKIDAHASAMEQLSDEQLREKTDEFKARYQKGETLDELLPEAFAVVREAAKRVLGLFPYRVQLMGGIVLHDGNIPEMRTGEGKTLTATMPVYLNALSGEGVHVVTVNEYLATRDSNEMGELYNFLGLSVGLNINSKSSDEKREAYNCDITYSTNNELGFDYLRDNMVVYRSQMVQRPLNYAIVDEVDSILIDEARTPLIISGQAEKSTALYTRADNFVKRLKEDEDYKIDIQSKTIGLTEAGIEKAEQTFGLDNLYDIENTALTHHLDQALRANYIMLLDIDYVVQDNKVLIVDQFTGRIMDGRRYSDGLHQAIEAKEGVEIEDETKTMATITFQNYFRMYKKLAGMTGTAKTEEEEFREIYNIQVIQIPTNRPIIRDDRPDLLYPTLESKFNAVVEDIKERYHKGQPVLVGTVAVETSELLSDKLNAAKIPHEVLNAKNHFKEAEIIMNAGQKGAVTIATNMAGRGTDIKLGLGVLELGGLAVIGTERHESRRIDNQLRGRAGRQGDPGVSQFYLSLEDDLMKRFGSERIKTFLERMNVQEEDAVIQSKMFTRQVESAQKRVEGNNYDTRKNVLQYDDVMREQREVIYAQRQEVIMEENDLSDVLMGMVKRTIGRVVDSHTQLEKEEWNLDGIVDFAASTLVHEDTISKKDLENKSAEEIKDYLVARAQEVFEEKSQQLNGQEQLLEFEKVVILRVVDTKWTDHIDAMDQLRQSVGLRAYGQNNPLVEYQTEGYSMYNNMVGSIEYEVTRLFMKSEIRQNVQREQVAQGQAEHPETEQDAAAQSNTSAKRQPVRVDKKVGRNDLCPCGSGKKFKNCHGRNA.

ATP-binding positions include glutamine 85, 103–107 (GEGKT), and aspartate 492. Positions 787 to 845 (REQVAQGQAEHPETEQDAAAQSNTSAKRQPVRVDKKVGRNDLCPCGSGKKFKNCHGRNA) are disordered. 4 residues coordinate Zn(2+): cysteine 829, cysteine 831, cysteine 840, and histidine 841. Positions 835-845 (KKFKNCHGRNA) are enriched in basic residues.

It belongs to the SecA family. As to quaternary structure, monomer and homodimer. Part of the essential Sec protein translocation apparatus which comprises SecA, SecYEG and auxiliary proteins SecDF. Other proteins may also be involved. Requires Zn(2+) as cofactor.

The protein resides in the cell membrane. The protein localises to the cytoplasm. It carries out the reaction ATP + H2O + cellular proteinSide 1 = ADP + phosphate + cellular proteinSide 2.. Part of the Sec protein translocase complex. Interacts with the SecYEG preprotein conducting channel. Has a central role in coupling the hydrolysis of ATP to the transfer of proteins into and across the cell membrane, serving as an ATP-driven molecular motor driving the stepwise translocation of polypeptide chains across the membrane. This chain is Protein translocase subunit SecA, found in Enterococcus faecalis (strain ATCC 700802 / V583).